We begin with the raw amino-acid sequence, 457 residues long: Argininosuccinate lyase (457 aa).

This sequence belongs to the lyase 1 family. Argininosuccinate lyase subfamily.

It is found in the cytoplasm. It catalyses the reaction 2-(N(omega)-L-arginino)succinate = fumarate + L-arginine. It functions in the pathway amino-acid biosynthesis; L-arginine biosynthesis; L-arginine from L-ornithine and carbamoyl phosphate: step 3/3. The protein is Argininosuccinate lyase of Shigella dysenteriae serotype 1 (strain Sd197).